Consider the following 141-residue polypeptide: 3-hydroxyacyl-[acyl-carrier-protein] dehydratase FabZ (141 aa).

The active site involves His-49.

It belongs to the thioester dehydratase family. FabZ subfamily.

It localises to the cytoplasm. The enzyme catalyses a (3R)-hydroxyacyl-[ACP] = a (2E)-enoyl-[ACP] + H2O. Involved in unsaturated fatty acids biosynthesis. Catalyzes the dehydration of short chain beta-hydroxyacyl-ACPs and long chain saturated and unsaturated beta-hydroxyacyl-ACPs. The polypeptide is 3-hydroxyacyl-[acyl-carrier-protein] dehydratase FabZ (Clostridium acetobutylicum (strain ATCC 824 / DSM 792 / JCM 1419 / IAM 19013 / LMG 5710 / NBRC 13948 / NRRL B-527 / VKM B-1787 / 2291 / W)).